Here is a 488-residue protein sequence, read N- to C-terminus: Glutamyl-tRNA(Gln) amidotransferase subunit A (488 aa).

Residues Lys77 and Ser152 each act as charge relay system in the active site. The active-site Acyl-ester intermediate is the Ser176.

Belongs to the amidase family. GatA subfamily. In terms of assembly, heterotrimer of A, B and C subunits.

It carries out the reaction L-glutamyl-tRNA(Gln) + L-glutamine + ATP + H2O = L-glutaminyl-tRNA(Gln) + L-glutamate + ADP + phosphate + H(+). Its function is as follows. Allows the formation of correctly charged Gln-tRNA(Gln) through the transamidation of misacylated Glu-tRNA(Gln) in organisms which lack glutaminyl-tRNA synthetase. The reaction takes place in the presence of glutamine and ATP through an activated gamma-phospho-Glu-tRNA(Gln). This is Glutamyl-tRNA(Gln) amidotransferase subunit A from Streptococcus pyogenes serotype M12 (strain MGAS2096).